The chain runs to 282 residues: (4-alkanoyl-5-oxo-2,5-dihydrofuran-3-yl)methyl phosphate reductase (282 aa).

6–11 is a binding site for NADP(+); that stretch reads GATGAV.

This sequence belongs to the NmrA-type oxidoreductase family.

It catalyses the reaction a [(3S,4R)-4-alkanoyl-5-oxooxolan-3-yl]methyl phosphate + NADP(+) = a (4-alkanoyl-5-oxo-2,5-dihydrofuran-3-yl)methyl phosphate + NADPH + H(+). The enzyme catalyses [(3S,4R)-4-(6-methylheptanoyl)-5-oxooxolan-3-yl]methyl phosphate + NADP(+) = [4-(6-methylheptanoyl)-5-oxo-2H-furan-3-yl]methyl phosphate + NADPH + H(+). In terms of biological role, involved in the biosynthesis of A factor (2-isocapryloyl-3R-hydroxymethyl-gamma-butyrolactone), a gamma-butyrolactone autoregulator that triggers secondary metabolism and morphogenesis in Streptomyces. Catalyzes the reduction of the butenolide phosphate produced by nonenzymatic intramolecular condensation of the 8-methyl-3-oxononanoyl-DHAP ester. This is (4-alkanoyl-5-oxo-2,5-dihydrofuran-3-yl)methyl phosphate reductase from Streptomyces griseus subsp. griseus (strain JCM 4626 / CBS 651.72 / NBRC 13350 / KCC S-0626 / ISP 5235).